Consider the following 219-residue polypeptide: Cytidylate kinase (219 aa).

10–18 (GPAAAGKST) lines the ATP pocket.

The protein belongs to the cytidylate kinase family. Type 1 subfamily.

Its subcellular location is the cytoplasm. The enzyme catalyses CMP + ATP = CDP + ADP. It carries out the reaction dCMP + ATP = dCDP + ADP. The sequence is that of Cytidylate kinase from Staphylococcus saprophyticus subsp. saprophyticus (strain ATCC 15305 / DSM 20229 / NCIMB 8711 / NCTC 7292 / S-41).